The primary structure comprises 864 residues: Alanine--tRNA ligase (864 aa).

Zn(2+) is bound by residues histidine 534, histidine 538, cysteine 639, and histidine 643.

The protein belongs to the class-II aminoacyl-tRNA synthetase family. It depends on Zn(2+) as a cofactor.

The protein resides in the cytoplasm. The catalysed reaction is tRNA(Ala) + L-alanine + ATP = L-alanyl-tRNA(Ala) + AMP + diphosphate. In terms of biological role, catalyzes the attachment of alanine to tRNA(Ala) in a two-step reaction: alanine is first activated by ATP to form Ala-AMP and then transferred to the acceptor end of tRNA(Ala). Also edits incorrectly charged Ser-tRNA(Ala) and Gly-tRNA(Ala) via its editing domain. This chain is Alanine--tRNA ligase, found in Onion yellows phytoplasma (strain OY-M).